The primary structure comprises 64 residues: Alpha-mammal toxin Lqh2 (64 aa).

Residues 2–64 (KDGYIVDDVN…VRTKGPGRCR (63 aa)) form the LCN-type CS-alpha/beta domain. 4 disulfides stabilise this stretch: cysteine 12–cysteine 63, cysteine 16–cysteine 36, cysteine 22–cysteine 46, and cysteine 26–cysteine 48. Arginine 64 bears the Arginine amide mark.

The protein belongs to the long (4 C-C) scorpion toxin superfamily. Sodium channel inhibitor family. Alpha subfamily. Expressed by the venom gland.

It localises to the secreted. Functionally, alpha toxins bind voltage-independently at site-3 of sodium channels (Nav) and inhibit the inactivation of the activated channels, thereby blocking neuronal transmission. The dissociation is voltage-dependent. Is active on mammals and competes for alpha-toxins binding on both mammalian and cockroach sodium channels. In Leiurus hebraeus (Hebrew deathstalker scorpion), this protein is Alpha-mammal toxin Lqh2.